A 121-amino-acid polypeptide reads, in one-letter code: Large ribosomal subunit protein bL12 (121 aa).

The protein belongs to the bacterial ribosomal protein bL12 family. In terms of assembly, homodimer. Part of the ribosomal stalk of the 50S ribosomal subunit. Forms a multimeric L10(L12)X complex, where L10 forms an elongated spine to which 2 to 4 L12 dimers bind in a sequential fashion. Binds GTP-bound translation factors.

Its function is as follows. Forms part of the ribosomal stalk which helps the ribosome interact with GTP-bound translation factors. Is thus essential for accurate translation. In Enterobacter sp. (strain 638), this protein is Large ribosomal subunit protein bL12.